We begin with the raw amino-acid sequence, 364 residues long: Tyrosine--tRNA ligase (364 aa).

Tyrosine 39 contributes to the L-tyrosine binding site. Residues histidine 49 and tryptophan 52 each coordinate ATP. Positions 165, 169, 172, and 187 each coordinate L-tyrosine. The 'KMSKS' region signature appears at 238–242 (KMSKS). Lysine 241 contributes to the ATP binding site.

This sequence belongs to the class-I aminoacyl-tRNA synthetase family. TyrS type 4 subfamily. Homodimer.

Its subcellular location is the cytoplasm. It carries out the reaction tRNA(Tyr) + L-tyrosine + ATP = L-tyrosyl-tRNA(Tyr) + AMP + diphosphate + H(+). In terms of biological role, catalyzes the attachment of tyrosine to tRNA(Tyr) in a two-step reaction: tyrosine is first activated by ATP to form Tyr-AMP and then transferred to the acceptor end of tRNA(Tyr). The protein is Tyrosine--tRNA ligase of Aeropyrum pernix (strain ATCC 700893 / DSM 11879 / JCM 9820 / NBRC 100138 / K1).